Reading from the N-terminus, the 96-residue chain is MTMDTAQLKSQIQQYLVESGNYELISNELKARLLQEGWVDKVKDLTKSEMNINESTNFTQILSTVEPKALEMVSDSTRETVLKQIREFLEGIVDTQ.

Lys68 participates in a covalent cross-link: Glycyl lysine isopeptide (Lys-Gly) (interchain with G-Cter in ubiquitin).

This sequence belongs to the ENY2 family. As to quaternary structure, component of the nuclear pore complex (NPC)-associated TREX-2 complex (transcription and export complex 2), composed of at least SUS1, SAC3, THP1, SEM1, and CDC31. TREX-2 contains 2 SUS1 chains. The TREX-2 complex interacts with the nucleoporin NUP1. Component of the 1.8 MDa SAGA transcription coactivator-HAT complex. SAGA is built of 5 distinct domains with specialized functions. Within the SAGA complex, SUS1, SGF11, SGF73 and UBP8 form an additional subcomplex of SAGA called the DUB module (deubiquitination module). Interacts directly with THP1, SAC3, SGF11, and with the RNA polymerase II.

The protein resides in the nucleus. The protein localises to the nucleoplasm. It is found in the cytoplasm. It localises to the P-body. Its function is as follows. Involved in mRNA export coupled transcription activation by association with both the TREX-2 and the SAGA complexes. At the promoters, SAGA is required for recruitment of the basal transcription machinery. It influences RNA polymerase II transcriptional activity through different activities such as TBP interaction and promoter selectivity, interaction with transcription activators, and chromatin modification through histone acetylation and deubiquitination. Within the SAGA complex, participates in a subcomplex required for deubiquitination of H2B and for the maintenance of steady-state H3 methylation levels. The TREX-2 complex functions in docking export-competent ribonucleoprotein particles (mRNPs) to the nuclear entrance of the nuclear pore complex (nuclear basket). TREX-2 participates in mRNA export and accurate chromatin positioning in the nucleus by tethering genes to the nuclear periphery. May also be involved in cytoplasmic mRNA decay by interaction with components of P-bodies. The polypeptide is Transcription and mRNA export factor SUS1 (Saccharomyces cerevisiae (strain RM11-1a) (Baker's yeast)).